We begin with the raw amino-acid sequence, 99 residues long: Protein AC4 (99 aa).

This sequence belongs to the geminiviridae protein AC4/C4 family.

Pathogenicity determinant. May act as a suppressor of RNA-mediated gene silencing, also known as post-transcriptional gene silencing (PTGS), a mechanism of plant viral defense that limits the accumulation of viral RNAs. The protein is Protein AC4 of Glycine max (Soybean).